The following is a 102-amino-acid chain: DET1- and DDB1-associated protein 1 (102 aa).

Positions 67–102 are disordered; it reads NAAKKRDQEQVEIEGENSAPPRKIARTDSQDMNEDT.

This sequence belongs to the DDA1 family. Component of numerous DCX (DDB1-CUL4-X-box) E3 ubiquitin-protein ligase complexes which consist of a core of DDB1, cullin-4 (CUL4A or CUL4B), DDA1 and RBX1.

It participates in protein modification; protein ubiquitination. In terms of biological role, functions as a component of numerous distinct DCX (DDB1-CUL4-X-box) E3 ubiquitin-protein ligase complexes which mediate the ubiquitination and subsequent proteasomal degradation of target proteins. In the DCX complexes, acts as a scaffolding subunit required to stabilize the complex. The protein is DET1- and DDB1-associated protein 1 of Gallus gallus (Chicken).